The following is a 363-amino-acid chain: 3-dehydroquinate synthase (363 aa).

Residues 75-80 (DAEEGK), 109-113 (GAVTD), 133-134 (TS), lysine 146, lysine 155, and 173-176 (TLST) each bind NAD(+). Zn(2+)-binding residues include glutamate 188, histidine 251, and histidine 267.

It belongs to the sugar phosphate cyclases superfamily. Dehydroquinate synthase family. Co(2+) serves as cofactor. It depends on Zn(2+) as a cofactor. The cofactor is NAD(+).

It localises to the cytoplasm. The enzyme catalyses 7-phospho-2-dehydro-3-deoxy-D-arabino-heptonate = 3-dehydroquinate + phosphate. It functions in the pathway metabolic intermediate biosynthesis; chorismate biosynthesis; chorismate from D-erythrose 4-phosphate and phosphoenolpyruvate: step 2/7. Catalyzes the conversion of 3-deoxy-D-arabino-heptulosonate 7-phosphate (DAHP) to dehydroquinate (DHQ). This Arthrobacter sp. (strain FB24) protein is 3-dehydroquinate synthase.